The chain runs to 339 residues: NADPH dehydrogenase (339 aa).

Serine 24–cysteine 27 lines the FMN pocket. Residue tyrosine 29 coordinates substrate. 2 residues coordinate FMN: alanine 61 and glutamine 103. Histidine 165 to histidine 168 contributes to the substrate binding site. Residues arginine 216 and alanine 308–arginine 309 each bind FMN.

The protein belongs to the NADH:flavin oxidoreductase/NADH oxidase family. NamA subfamily. In terms of assembly, homotetramer. It depends on FMN as a cofactor.

It catalyses the reaction A + NADPH + H(+) = AH2 + NADP(+). In terms of biological role, catalyzes the reduction of the double bond of an array of alpha,beta-unsaturated aldehydes and ketones. It also reduces the nitro group of nitroester and nitroaromatic compounds. It could have a role in detoxification processes. In Bacillus licheniformis (strain ATCC 14580 / DSM 13 / JCM 2505 / CCUG 7422 / NBRC 12200 / NCIMB 9375 / NCTC 10341 / NRRL NRS-1264 / Gibson 46), this protein is NADPH dehydrogenase.